Reading from the N-terminus, the 166-residue chain is NAD(P)H-quinone oxidoreductase subunit I, chloroplastic (166 aa).

4Fe-4S ferredoxin-type domains follow at residues Gly-55–Lys-84 and Leu-95–Glu-124. Positions 64, 67, 70, 74, 104, 107, 110, and 114 each coordinate [4Fe-4S] cluster.

It belongs to the complex I 23 kDa subunit family. As to quaternary structure, NDH is composed of at least 16 different subunits, 5 of which are encoded in the nucleus. Requires [4Fe-4S] cluster as cofactor.

It localises to the plastid. The protein localises to the chloroplast thylakoid membrane. The catalysed reaction is a plastoquinone + NADH + (n+1) H(+)(in) = a plastoquinol + NAD(+) + n H(+)(out). The enzyme catalyses a plastoquinone + NADPH + (n+1) H(+)(in) = a plastoquinol + NADP(+) + n H(+)(out). Its function is as follows. NDH shuttles electrons from NAD(P)H:plastoquinone, via FMN and iron-sulfur (Fe-S) centers, to quinones in the photosynthetic chain and possibly in a chloroplast respiratory chain. The immediate electron acceptor for the enzyme in this species is believed to be plastoquinone. Couples the redox reaction to proton translocation, and thus conserves the redox energy in a proton gradient. The chain is NAD(P)H-quinone oxidoreductase subunit I, chloroplastic from Stevia rebaudiana (Stevia).